A 186-amino-acid polypeptide reads, in one-letter code: ATP synthase subunit delta (186 aa).

The protein belongs to the ATPase delta chain family. As to quaternary structure, F-type ATPases have 2 components, F(1) - the catalytic core - and F(0) - the membrane proton channel. F(1) has five subunits: alpha(3), beta(3), gamma(1), delta(1), epsilon(1). F(0) has three main subunits: a(1), b(2) and c(10-14). The alpha and beta chains form an alternating ring which encloses part of the gamma chain. F(1) is attached to F(0) by a central stalk formed by the gamma and epsilon chains, while a peripheral stalk is formed by the delta and b chains.

It localises to the cell inner membrane. Its function is as follows. F(1)F(0) ATP synthase produces ATP from ADP in the presence of a proton or sodium gradient. F-type ATPases consist of two structural domains, F(1) containing the extramembraneous catalytic core and F(0) containing the membrane proton channel, linked together by a central stalk and a peripheral stalk. During catalysis, ATP synthesis in the catalytic domain of F(1) is coupled via a rotary mechanism of the central stalk subunits to proton translocation. In terms of biological role, this protein is part of the stalk that links CF(0) to CF(1). It either transmits conformational changes from CF(0) to CF(1) or is implicated in proton conduction. In Chelativorans sp. (strain BNC1), this protein is ATP synthase subunit delta.